Reading from the N-terminus, the 371-residue chain is Chaperone protein DnaJ (371 aa).

In terms of domain architecture, J spans 4–68; the sequence is DYYQILGVSK…QKRAAYDRFG (65 aa). The CR-type zinc-finger motif lies at 134-212; that stretch reads GIEKNISFSS…CHGMGRYHKQ (79 aa). Zn(2+) contacts are provided by Cys147, Cys150, Cys164, Cys167, Cys186, Cys189, Cys200, and Cys203. CXXCXGXG motif repeat units follow at residues 147–154, 164–171, 186–193, and 200–207; these read CDTCHGTG, CDACGGVG, CHKCQGNG, and CKKCHGMG.

This sequence belongs to the DnaJ family. Homodimer. Requires Zn(2+) as cofactor.

It is found in the cytoplasm. In terms of biological role, participates actively in the response to hyperosmotic and heat shock by preventing the aggregation of stress-denatured proteins and by disaggregating proteins, also in an autonomous, DnaK-independent fashion. Unfolded proteins bind initially to DnaJ; upon interaction with the DnaJ-bound protein, DnaK hydrolyzes its bound ATP, resulting in the formation of a stable complex. GrpE releases ADP from DnaK; ATP binding to DnaK triggers the release of the substrate protein, thus completing the reaction cycle. Several rounds of ATP-dependent interactions between DnaJ, DnaK and GrpE are required for fully efficient folding. Also involved, together with DnaK and GrpE, in the DNA replication of plasmids through activation of initiation proteins. The sequence is that of Chaperone protein DnaJ from Rickettsia felis (strain ATCC VR-1525 / URRWXCal2) (Rickettsia azadi).